Here is a 387-residue protein sequence, read N- to C-terminus: Eukaryotic translation initiation factor 3 subunit M (387 aa).

In terms of domain architecture, PCI spans 181–340 (LSSKVMIELL…RKVHISSTMH (160 aa)).

The protein belongs to the eIF-3 subunit M family. As to quaternary structure, component of the eukaryotic translation initiation factor 3 (eIF-3) complex. The eIF-3 complex interacts with pix.

Its subcellular location is the cytoplasm. It is found in the golgi apparatus. Its function is as follows. Component of the eukaryotic translation initiation factor 3 (eIF-3) complex, which is involved in protein synthesis of a specialized repertoire of mRNAs and, together with other initiation factors, stimulates binding of mRNA and methionyl-tRNAi to the 40S ribosome. The eIF-3 complex specifically targets and initiates translation of a subset of mRNAs involved in cell proliferation. In Drosophila persimilis (Fruit fly), this protein is Eukaryotic translation initiation factor 3 subunit M.